The chain runs to 691 residues: Elongation factor G (691 aa).

Residues 8-282 form the tr-type G domain; the sequence is ERVRNIGIAA…AVVDYLPAPI (275 aa). Residues 17–24, 81–85, and 135–138 each bind GTP; these read AHIDAGKT, DTPGH, and NKMD.

Belongs to the TRAFAC class translation factor GTPase superfamily. Classic translation factor GTPase family. EF-G/EF-2 subfamily.

Its subcellular location is the cytoplasm. Functionally, catalyzes the GTP-dependent ribosomal translocation step during translation elongation. During this step, the ribosome changes from the pre-translocational (PRE) to the post-translocational (POST) state as the newly formed A-site-bound peptidyl-tRNA and P-site-bound deacylated tRNA move to the P and E sites, respectively. Catalyzes the coordinated movement of the two tRNA molecules, the mRNA and conformational changes in the ribosome. This chain is Elongation factor G, found in Synechococcus sp. (strain CC9311).